The sequence spans 577 residues: Moesin (577 aa).

In terms of domain architecture, FERM spans 2–295 (PKTINVRVTT…GNHELYMRRR (294 aa)). S74 is modified (phosphoserine). K79 bears the N6-acetyllysine mark. At K83 the chain carries N6-succinyllysine. The short motif at 115-120 (IYCPPE) is the [IL]-x-C-x-x-[DE] motif element. Y116 carries the post-translational modification Phosphotyrosine. An S-nitrosocysteine modification is found at C117. 2 positions are modified to N6-acetyllysine: K139 and K165. Residues 375-401 (LEQERKRAQSEAEKLAKERQEAEEAKE) are compositionally biased toward basic and acidic residues. Disordered regions lie at residues 375–409 (LEQE…ASQD) and 466–518 (AMST…NERV). The residue at position 407 (S407) is a Phosphoserine. A compositionally biased stretch (acidic residues) spans 476–487 (AENEQDEQDENG). Basic and acidic residues predominate over residues 492-518 (AELRADAMAKDRSEEERTTEAEKNERV). Residue S527 is modified to Phosphoserine. T558 carries the phosphothreonine; by ROCK2 and STK10 modification.

As to quaternary structure, in resting T-cells, part of a PAG1-NHERF1-MSN complex which is disrupted upon TCR activation. Interacts with NHERF1. Interacts with PPP1R16B. Interacts with PDZD8. Interacts with SELPLG and SYK; these interactions mediate the activation of SYK by SELPLG. Interacts with PDPN (via cytoplasmic domain); this interaction activates RHOA and promotes epithelial-mesenchymal transition. Interacts with SPN/CD43 cytoplasmic tail. Interacts with CD44. Interacts with ICAM2. Interacts with ICAM3 (via C-terminus). Interacts with PDZD8. Interacts with F-actin. Interacts with CD46. Interacts with PTPN6. In terms of processing, phosphorylation on Thr-558 is crucial for the formation of microvilli-like structures. Phosphorylation by ROCK2 suppresses the head-to-tail association of the N-terminal and C-terminal halves resulting in an opened conformation which is capable of actin and membrane-binding. Phosphorylation on Thr-558 by STK10 negatively regulates lymphocyte migration and polarization. Post-translationally, S-nitrosylation of Cys-117 is induced by interferon-gamma and oxidatively-modified low-densitity lipoprotein (LDL(ox)) implicating the iNOS-S100A8/9 transnitrosylase complex.

The protein localises to the cell membrane. The protein resides in the cytoplasm. It is found in the cytoskeleton. It localises to the apical cell membrane. Its subcellular location is the cell projection. The protein localises to the microvillus membrane. The protein resides in the microvillus. A head-to-tail association, of the N-terminal and C-terminal halves results in a closed conformation (inactive form) which is incapable of actin or membrane-binding. In terms of biological role, ezrin-radixin-moesin (ERM) family protein that connects the actin cytoskeleton to the plasma membrane and thereby regulates the structure and function of specific domains of the cell cortex. Tethers actin filaments by oscillating between a resting and an activated state providing transient interactions between moesin and the actin cytoskeleton. Once phosphorylated on its C-terminal threonine, moesin is activated leading to interaction with F-actin and cytoskeletal rearrangement. These rearrangements regulate many cellular processes, including cell shape determination, membrane transport, and signal transduction. The role of moesin is particularly important in immunity acting on both T and B-cells homeostasis and self-tolerance, regulating lymphocyte egress from lymphoid organs. Modulates phagolysosomal biogenesis in macrophages. Participates also in immunologic synapse formation. The sequence is that of Moesin from Bos taurus (Bovine).